The following is a 208-amino-acid chain: Small ribosomal subunit protein uS3 (208 aa).

The region spanning 38–106 (IRDYIKARLY…EILIDIQEVR (69 aa)) is the KH type-2 domain.

It belongs to the universal ribosomal protein uS3 family. As to quaternary structure, part of the 30S ribosomal subunit. Forms a tight complex with proteins S10 and S14.

Binds the lower part of the 30S subunit head. Binds mRNA in the 70S ribosome, positioning it for translation. The chain is Small ribosomal subunit protein uS3 from Syntrophobacter fumaroxidans (strain DSM 10017 / MPOB).